The primary structure comprises 107 residues: Insulin-like peptide 6 (107 aa).

An N-terminal signal peptide occupies residues 1–33 (MVLKVPTSKVLLVLATLFAVAAMISSWMPQVAA). 3 disulfide bridges follow: Cys-48/Cys-91, Cys-60/Cys-105, and Cys-90/Cys-96. The propeptide at 67-76 (LGDVFPNSFG) is connecting peptide.

The protein belongs to the insulin family. Heterodimer of a B chain and an A chain linked by two disulfide bonds. Expressed at a low level in the larval gut.

The protein resides in the secreted. Possible ligand of InR/insulin-like receptor. This is Insulin-like peptide 6 from Drosophila melanogaster (Fruit fly).